The chain runs to 622 residues: Probable E3 ubiquitin-protein ligase DTX2 (622 aa).

2 consecutive WWE domains span residues S8–R97 and H98–R174. R213, R215, and R233 each carry asymmetric dimethylarginine. K249 is subject to N6-acetyllysine. 2 disordered regions span residues K249–Q324 and A355–P393. R256 carries the post-translational modification Omega-N-methylarginine. Residues L274 to S285 show a composition bias toward polar residues. A compositionally biased stretch (low complexity) spans S299–P322. S360 is modified (phosphoserine). The segment covering G372–S381 has biased composition (basic residues). The RING-type zinc finger occupies C412–K473.

Belongs to the Deltex family. In terms of assembly, homodimer. May form a heterodimer with other members of the Deltex family. Interacts with NOTCH1.

It is found in the cytoplasm. It localises to the nucleus. It carries out the reaction S-ubiquitinyl-[E2 ubiquitin-conjugating enzyme]-L-cysteine + [acceptor protein]-L-lysine = [E2 ubiquitin-conjugating enzyme]-L-cysteine + N(6)-ubiquitinyl-[acceptor protein]-L-lysine.. Its pathway is protein modification; protein ubiquitination. In terms of biological role, regulator of Notch signaling, a signaling pathway involved in cell-cell communications that regulates a broad spectrum of cell-fate determinations. Probably acts both as a positive and negative regulator of Notch, depending on the developmental and cell context. Mediates the antineural activity of Notch, possibly by inhibiting the transcriptional activation mediated by MATCH1. Functions as a ubiquitin ligase protein in vitro, suggesting that it may regulate the Notch pathway via some ubiquitin ligase activity. In Homo sapiens (Human), this protein is Probable E3 ubiquitin-protein ligase DTX2 (DTX2).